Here is a 778-residue protein sequence, read N- to C-terminus: Beta-phellandrene synthase (neryl-diphosphate-cyclizing), chloroplastic (778 aa).

Residues Met1–Arg36 constitute a chloroplast transit peptide. Asp531, Asn676, and Glu684 together coordinate Mg(2+). The DDXXD motif motif lies at Asp531–Glu535.

This sequence belongs to the terpene synthase family. Tpse subfamily. The cofactor is Mg(2+). Trichomes.

It is found in the plastid. The protein resides in the chloroplast. It carries out the reaction neryl diphosphate = beta-phellandrene + diphosphate. Its function is as follows. Monoterpene synthase catalyzing the production of beta-phellandrene from neryl diphosphate. Also produces lower amounts of delta-2-carene, alpha-phellandrene and limonene. When incubated in vitro with geranyl diphosphate, catalyzes the formation of acyclic myrcene and ocimene as major products in addition to beta-phellandrene. This Solanum lycopersicum (Tomato) protein is Beta-phellandrene synthase (neryl-diphosphate-cyclizing), chloroplastic (PHS1).